The chain runs to 480 residues: Ribulose bisphosphate carboxylase large chain (480 aa).

Residues 1-2 (MS) constitute a propeptide that is removed on maturation. An N-acetylproline modification is found at Pro-3. Lys-14 is modified (N6,N6,N6-trimethyllysine). Asn-123 and Thr-173 together coordinate substrate. The Proton acceptor role is filled by Lys-175. Lys-177 is a binding site for substrate. Lys-201, Asp-203, and Glu-204 together coordinate Mg(2+). Residue Lys-201 is modified to N6-carboxylysine. The active-site Proton acceptor is the His-294. Residues Arg-295, His-327, and Ser-379 each coordinate substrate.

This sequence belongs to the RuBisCO large chain family. Type I subfamily. Heterohexadecamer of 8 large chains and 8 small chains; disulfide-linked. The disulfide link is formed within the large subunit homodimers. Mg(2+) is required as a cofactor. Post-translationally, the disulfide bond which can form in the large chain dimeric partners within the hexadecamer appears to be associated with oxidative stress and protein turnover.

The protein localises to the plastid. The protein resides in the chloroplast. It catalyses the reaction 2 (2R)-3-phosphoglycerate + 2 H(+) = D-ribulose 1,5-bisphosphate + CO2 + H2O. It carries out the reaction D-ribulose 1,5-bisphosphate + O2 = 2-phosphoglycolate + (2R)-3-phosphoglycerate + 2 H(+). RuBisCO catalyzes two reactions: the carboxylation of D-ribulose 1,5-bisphosphate, the primary event in carbon dioxide fixation, as well as the oxidative fragmentation of the pentose substrate in the photorespiration process. Both reactions occur simultaneously and in competition at the same active site. In Basella alba (Malabar spinach), this protein is Ribulose bisphosphate carboxylase large chain.